Here is a 200-residue protein sequence, read N- to C-terminus: Exopolysaccharide production protein PSS (200 aa).

Belongs to the bacterial sugar transferase family.

This Rhizobium leguminosarum bv. phaseoli protein is Exopolysaccharide production protein PSS (pss).